The sequence spans 204 residues: Peptide deformylase (204 aa).

Fe cation contacts are provided by Cys131 and His174. Glu175 is a catalytic residue. A Fe cation-binding site is contributed by His178.

It belongs to the polypeptide deformylase family. Fe(2+) is required as a cofactor.

It carries out the reaction N-terminal N-formyl-L-methionyl-[peptide] + H2O = N-terminal L-methionyl-[peptide] + formate. Its function is as follows. Removes the formyl group from the N-terminal Met of newly synthesized proteins. Requires at least a dipeptide for an efficient rate of reaction. N-terminal L-methionine is a prerequisite for activity but the enzyme has broad specificity at other positions. This Streptococcus gordonii (strain Challis / ATCC 35105 / BCRC 15272 / CH1 / DL1 / V288) protein is Peptide deformylase.